Here is a 440-residue protein sequence, read N- to C-terminus: Protein ABHD8 (440 aa).

Positions 123 to 158 (DPAGSDGRSAPGSGSGSGSGSGSGGRRRRARRPKRT) are disordered. Residues 124–134 (PAGSDGRSAPG) are compositionally biased toward low complexity. The span at 135 to 146 (SGSGSGSGSGSG) shows a compositional bias: gly residues. A compositionally biased stretch (basic residues) spans 147-158 (GRRRRARRPKRT). Positions 178 to 280 (VLFFIHGVGG…HKVIMINGGG (103 aa)) constitute an AB hydrolase-1 domain. Catalysis depends on charge relay system residues serine 253, aspartate 371, and histidine 399.

Belongs to the AB hydrolase superfamily. Interacts with NLRP3 (via NACHT and LLR domains); this interaction is enhanced in the presence of NLRP3 inflammasome inducers, such as ATP, nigericin, silica, or alum. Interacts with ZDHHC12.

It is found in the cytoplasm. Functionally, negatively regulates NLRP3-driven inflammation. Promotes NLRP3 degradation through the chaperone-mediated autophagy (CMA) pathway, hence attenuating inflammasome activation and IL1B secretion. Acts by recruiting palmitoyltransferase ZDHHC12 to NLRP3, facilitating NLRP3 palmitoylation and subsequent degradation. The sequence is that of Protein ABHD8 from Macaca fascicularis (Crab-eating macaque).